The chain runs to 264 residues: ATP synthase subunit a (264 aa).

5 helical membrane-spanning segments follow: residues 39-59, 97-117, 139-159, 205-225, and 239-259; these read LDTL…FYIV, VAPL…MDLV, TADP…VIFY, LFGN…LPWW, and LLVI…YISL.

It belongs to the ATPase A chain family. In terms of assembly, F-type ATPases have 2 components, CF(1) - the catalytic core - and CF(0) - the membrane proton channel. CF(1) has five subunits: alpha(3), beta(3), gamma(1), delta(1), epsilon(1). CF(0) has three main subunits: a(1), b(2) and c(9-12). The alpha and beta chains form an alternating ring which encloses part of the gamma chain. CF(1) is attached to CF(0) by a central stalk formed by the gamma and epsilon chains, while a peripheral stalk is formed by the delta and b chains.

Its subcellular location is the cell inner membrane. Key component of the proton channel; it plays a direct role in the translocation of protons across the membrane. The sequence is that of ATP synthase subunit a from Coxiella burnetii (strain Dugway 5J108-111).